A 776-amino-acid chain; its full sequence is K(+) efflux antiporter 3, chloroplastic (776 aa).

Residues 1 to 72 constitute a chloroplast transit peptide; that stretch reads MAISTMLGSI…KVFLDTSKRF (72 aa). Residues 73 to 93 are Lumenal, thylakoid-facing; that stretch reads YFQGRWSESSGRRVETYAGVD. Residues 94–114 traverse the membrane as a helical segment; it reads VASAVDVINDLGFDTLTFLMV. A topological domain (stromal) is located at residue Thr-115. Residues 116–136 traverse the membrane as a helical segment; the sequence is VIIVPAFRILKASPILGFFFA. At 137–153 the chain is on the lumenal, thylakoid side; that stretch reads GVVLNQFGLIRNLTDVK. Residues 154-174 form a helical membrane-spanning segment; that stretch reads VLSEWGILFLLFEMGLELSLA. Residues 175-181 are Stromal-facing; it reads RLKALAK. The helical transmembrane segment at 182–202 threads the bilayer; sequence FAFGMGLTQVLLCTAAFTAFE. Residues 203 to 232 lie on the Lumenal, thylakoid side of the membrane; that stretch reads LPPNGAIGTKILEFLFHSRPDLVNIRSIDE. A helical transmembrane segment spans residues 233–253; it reads AVVIGAALSLSSSAFVLQLLA. Over 254–266 the chain is Stromal; it reads EKGELPTRFGSAT. A helical transmembrane segment spans residues 267–287; the sequence is LGILLLQDIAVVPLLVILPVL. At 288 to 296 the chain is on the lumenal, thylakoid side; the sequence is ESQDIGGES. Residues 297–317 traverse the membrane as a helical segment; the sequence is IWPMLAKESAKALGGLGILSL. Residues 318–338 are Stromal-facing; sequence GGKFFLRRIFEVVAETRSSEA. A helical membrane pass occupies residues 339–359; the sequence is FVALCLLTVAGTSLVTQWLGF. Over 360–389 the chain is Lumenal, thylakoid; the sequence is SDTLGAFLAGALLAETNFRTQIEADIRPFR. A helical transmembrane segment spans residues 390–410; sequence GLLLGLFFVTTGTSIDMEVLF. Residues 411–415 are Stromal-facing; that stretch reads REWPN. A helical transmembrane segment spans residues 416–436; the sequence is VLSLLGGLIVIKTLIITAIGP. Topologically, residues 437–445 are lumenal, thylakoid; it reads RVGLTIQES. Residues 446-466 form a helical membrane-spanning segment; that stretch reads VRVGFLLSQGGEFAFVVFSLA. Topologically, residues 467–468 are stromal; it reads NR. The chain crosses the membrane as a helical span at residues 469–489; the sequence is LGVLPNELNKLLIIVVVLSMA. The Lumenal, thylakoid segment spans residues 490–526; the sequence is LTPYLNQLGRKAADFLDERLDPGEKIGEDVNFDVSES. Positions 524–649 constitute an RCK N-terminal domain; that stretch reads SESIVIIGFG…KKAGATDAIL (126 aa). The helical transmembrane segment at 527 to 547 threads the bilayer; that stretch reads IVIIGFGQMGQVLANFLSTPL. Residues 548-776 are Stromal-facing; that stretch reads VSDSDLVGWP…FVGKADKAQD (229 aa). Residues 728–776 are disordered; it reads MQMKASDSNSDSAAEILQETAGLSQPPEIDDSSVNIDNGFVGKADKAQD.

Belongs to the monovalent cation:proton antiporter 2 (CPA2) transporter (TC 2.A.37) family. KEA (TC 2.A.37.1) subfamily. As to expression, expressed at low levels in flowers, siliques and leaves. Expressed at low levels in flowers and leaves. In terms of tissue distribution, most abundant splice form in all organs, including siliques, flowers, leaves and roots. Preferentially expressed in photosynthetically active tissues, including seedling cotyledons and mature leaves. As to expression, expressed in shoots and roots.

It localises to the plastid. Its subcellular location is the chloroplast membrane. The protein resides in the golgi apparatus membrane. The protein localises to the chloroplast thylakoid membrane. The enzyme catalyses K(+)(in) + H(+)(out) = K(+)(out) + H(+)(in). Its activity is regulated as follows. Regulated by a mechanism involving lumenal C-terminus region; a fine-tuned balance between photoprotective energy dissipation in high light and a maximum quantum yield in low light involves a reduced activity under high light. Electroneutral K(+)/H(+) efflux antiporter assuring proton efflux from the thylakoid lumen to the plastid stroma, thus increasing the membrane potential at the expense of the proton gradient (delta pH) component of the proton motive force (PMF). Promotes photosynthesis and growth in conditions where the chloroplast (cp)ATP synthase activity is low (e.g. cgl160 mutant background) by reducing the pH gradient across the thylakoid membrane. Accelerates photosynthetic acclimation in fluctuating light environments by modulating two components of the proton motive force, the proton gradient and the electric potential (delta Psi). Promotes the relaxation of photoprotective energy-dependent non-photochemical quenching (NPQ) after transitions from high to low light, thus enhancing photosystem II (PSII) quantum efficiency in fluctuating light. On transition from high to low light, slows down photoprotection by dissipating the pH gradient across the thylakoid membrane. During photosynthetic response on transition from dark to low light, involved in a sequential mechanism of adaptation; VCCN1 and CLCe first trigger the activation of photoprotection, which is later down-regulated by KEA3 to a low steady state, while adjusting electron transport. Together with the chloroplast NADH dehydrogenase-like (NDH) complex, maximizes photosynthesis efficiency after a long dark adaptation. Required in roots for rapid hyperosmotic-induced Ca(2+) responses and for osmo-sensory potentiation in hyperosmotic conditions. Functionally, low K(+)/H(+) efflux antiporter activity. Its function is as follows. Low K(+)/H(+) efflux antiporter activity. Promotes non-photochemical quenching (NPQ) in high light conditions. This chain is K(+) efflux antiporter 3, chloroplastic, found in Arabidopsis thaliana (Mouse-ear cress).